The primary structure comprises 448 residues: C4-dicarboxylate transport protein (448 aa).

8 helical membrane passes run 20–38 (LYFQ…GHFY), 53–75 (IRLV…IAGM), 88–110 (AMIY…ANTV), 161–178 (ILQV…LGIV), 199–220 (LVAI…FTIG), 230–252 (LAML…LGAV), 325–347 (LFIA…LLVA), and 362–384 (FITL…ALIL).

The protein belongs to the dicarboxylate/amino acid:cation symporter (DAACS) (TC 2.A.23) family.

It localises to the cell inner membrane. Responsible for the transport of dicarboxylates such as succinate, fumarate, and malate from the periplasm across the membrane. The chain is C4-dicarboxylate transport protein from Agrobacterium fabrum (strain C58 / ATCC 33970) (Agrobacterium tumefaciens (strain C58)).